A 100-amino-acid polypeptide reads, in one-letter code: NAD(P)H-quinone oxidoreductase subunit 4L, chloroplastic (100 aa).

The next 3 helical transmembrane spans lie at Met-1–Ile-21, Ala-29–Asn-49, and Ile-63–Ile-83.

It belongs to the complex I subunit 4L family. In terms of assembly, NDH is composed of at least 16 different subunits, 5 of which are encoded in the nucleus.

It localises to the plastid. It is found in the chloroplast thylakoid membrane. It carries out the reaction a plastoquinone + NADH + (n+1) H(+)(in) = a plastoquinol + NAD(+) + n H(+)(out). The enzyme catalyses a plastoquinone + NADPH + (n+1) H(+)(in) = a plastoquinol + NADP(+) + n H(+)(out). Functionally, NDH shuttles electrons from NAD(P)H:plastoquinone, via FMN and iron-sulfur (Fe-S) centers, to quinones in the photosynthetic chain and possibly in a chloroplast respiratory chain. The immediate electron acceptor for the enzyme in this species is believed to be plastoquinone. Couples the redox reaction to proton translocation, and thus conserves the redox energy in a proton gradient. This Angiopteris evecta (Mule's foot fern) protein is NAD(P)H-quinone oxidoreductase subunit 4L, chloroplastic.